A 24-amino-acid chain; its full sequence is Brevinin-1SPc (24 aa).

Cys18 and Cys24 form a disulfide bridge.

In terms of tissue distribution, expressed by the skin glands.

It is found in the secreted. Antimicrobial peptide with activity against Gram-negative and Gram-positive bacteria and fungi. Also shows hemolytic activity. This Lithobates septentrionalis (Mink frog) protein is Brevinin-1SPc.